Reading from the N-terminus, the 250-residue chain is Transmembrane protein 106C (250 aa).

The disordered stretch occupies residues 1–25 (MGSQHSAAARPSSCRRKQEDDRDGL). Gly2 carries N-myristoyl glycine lipidation. A compositionally biased stretch (basic and acidic residues) spans 16-25 (RKQEDDRDGL). The chain crosses the membrane as a helical span at residues 87–107 (YVLLSILLCLLASGLVVFFLF). N-linked (GlcNAc...) asparagine glycans are attached at residues Asn173 and Asn186. Residues 197–217 (FSYVYFFCTVPEILVHNIVIF) form a helical membrane-spanning segment.

It belongs to the TMEM106 family. As to quaternary structure, interacts with TMEM106B.

It is found in the endoplasmic reticulum membrane. The protein localises to the membrane. This chain is Transmembrane protein 106C (TMEM106C), found in Homo sapiens (Human).